Here is a 614-residue protein sequence, read N- to C-terminus: Zinc metalloproteinase-disintegrin-like Eoc1 (614 aa).

Positions 1–19 are cleaved as a signal peptide; that stretch reads MQVLLITISLAVLPYLGSS. A propeptide spanning residues 20–193 is cleaved from the precursor; that stretch reads IILESGIVND…KASQLNLTPE (174 aa). Gln194 carries the pyrrolidone carboxylic acid modification. The region spanning 202–398 is the Peptidase M12B domain; the sequence is KHIKVAIVAD…KMPQCILIKP (197 aa). A glycan (N-linked (GlcNAc...) asparagine) is linked at Asn268. 3 cysteine pairs are disulfide-bonded: Cys313-Cys393, Cys353-Cys377, and Cys355-Cys360. His338 lines the Zn(2+) pocket. The active site involves Glu339. Zn(2+)-binding residues include His342 and His348. An N-linked (GlcNAc...) asparagine glycan is attached at Asn376. The 87-residue stretch at 406–492 folds into the Disintegrin domain; it reads PPVCGNSLVE…ECPADQFQRN (87 aa). Residues Val408, Asn411, Leu413, Glu415, Glu418, and Asp421 each contribute to the Ca(2+) site. Disulfide bonds link Cys409–Cys438, Cys420–Cys433, Cys422–Cys428, Cys432–Cys455, Cys446–Cys452, Cys451–Cys477, Cys464–Cys484, Cys471–Cys503, Cys496–Cys508, Cys515–Cys565, Cys530–Cys576, Cys543–Cys553, Cys560–Cys602, and Cys596–Cys607. A D/ECD-tripeptide motif is present at residues 470 to 472; the sequence is ECD. Asn498 carries an N-linked (GlcNAc...) asparagine glycan.

The protein belongs to the venom metalloproteinase (M12B) family. P-III subfamily. P-IIIc sub-subfamily. Heterodimer; disulfide-linked. Requires Zn(2+) as cofactor. In terms of tissue distribution, expressed by the venom gland.

It is found in the secreted. This metalloproteinase hydrolyzes azocasein, and oxidized insulin B-chain. Also hydrolyzes the alpha-chain (FGA) and more slowly the beta-chain of fibrinogen (FGB), without affecting the gamma-chain. Does not cleave fibrin. Inhibits endothelial cell adhesion to extracellular matrix proteins such as fibrinogen, fibronectin, vitronectin, collagen I, and collagen IV. Induces apoptosis in vascular endothelial cells. This chain is Zinc metalloproteinase-disintegrin-like Eoc1 (Svmp3-Eoc1), found in Echis ocellatus (Ocellated saw-scaled viper).